The following is a 598-amino-acid chain: Rho-related protein racA (598 aa).

Residue 11 to 17 participates in GTP binding; the sequence is DGAVGKS. Residues 32-40 carry the Effector region motif; the sequence is YVPTVFDNY. GTP-binding positions include 57–61 and 115–118; these read DTAGQ and TKND. Residues 175–210 form a disordered region; the sequence is ASAKKKGGFFSSSSSSSSSSSSKSSEKSVPIPPVMP. Residues 182 to 197 are compositionally biased toward low complexity; the sequence is GFFSSSSSSSSSSSSK. BTB domains follow at residues 239–344 and 405–472; these read SDVK…NYLD and SDIQ…PIEE.

The protein in the N-terminal section; belongs to the small GTPase superfamily. Rho family. As to quaternary structure, interacts with pakB.

The polypeptide is Rho-related protein racA (racA) (Dictyostelium discoideum (Social amoeba)).